The chain runs to 312 residues: tRNA pseudouridine synthase B (312 aa).

Asp47 functions as the Nucleophile in the catalytic mechanism.

This sequence belongs to the pseudouridine synthase TruB family. Type 1 subfamily.

The catalysed reaction is uridine(55) in tRNA = pseudouridine(55) in tRNA. Its function is as follows. Responsible for synthesis of pseudouridine from uracil-55 in the psi GC loop of transfer RNAs. The protein is tRNA pseudouridine synthase B of Vibrio cholerae serotype O1 (strain M66-2).